The sequence spans 445 residues: Phosphoglucosamine mutase (445 aa).

The active-site Phosphoserine intermediate is the Ser102. Mg(2+) is bound by residues Ser102, Asp241, Asp243, and Asp245. A Phosphoserine modification is found at Ser102.

The protein belongs to the phosphohexose mutase family. It depends on Mg(2+) as a cofactor. Activated by phosphorylation.

The catalysed reaction is alpha-D-glucosamine 1-phosphate = D-glucosamine 6-phosphate. Its function is as follows. Catalyzes the conversion of glucosamine-6-phosphate to glucosamine-1-phosphate. The polypeptide is Phosphoglucosamine mutase (Haemophilus influenzae (strain 86-028NP)).